We begin with the raw amino-acid sequence, 300 residues long: Iron-dependent extradiol dioxygenase (300 aa).

VOC domains follow at residues 5–120 and 142–270; these read SLGY…VFHG and GMGH…FGCE. His145 is a binding site for Fe cation. Residues His200, His215, Asp250, and Tyr256 each contribute to the substrate site. His215 contacts Fe cation. Glu266 lines the Fe cation pocket.

This sequence belongs to the extradiol ring-cleavage dioxygenase family. In terms of assembly, homodimer, but may form a homooctamer. It depends on Fe(2+) as a cofactor.

The catalysed reaction is 3,4-dihydroxy-9,10-secoandrosta-1,3,5(10)-triene-9,17-dione + O2 = (1E,2Z)-3-hydroxy-5,9,17-trioxo-4,5:9,10-disecoandrosta-1(10),2-dien-4-oate + H(+). The protein operates within steroid metabolism; cholesterol metabolism. Catalyzes the meta-cleavage of 3,4-dihydroxy-9,10-seconandrost-1,3,5(10)-triene-9,17-dione (3,4-DHSA) to produce 4,5-9,10-diseco-3-hydroxy-5,9,17-trioxoandrosta-1(10),2-diene-4-oic acid (4,9-DSHA). This is Iron-dependent extradiol dioxygenase (hsaC) from Mycobacterium tuberculosis (strain CDC 1551 / Oshkosh).